We begin with the raw amino-acid sequence, 305 residues long: UDP-3-O-acyl-N-acetylglucosamine deacetylase (305 aa).

The Zn(2+) site is built by H78, H235, and D239. The active-site Proton donor is H262.

It belongs to the LpxC family. Zn(2+) is required as a cofactor.

It catalyses the reaction a UDP-3-O-[(3R)-3-hydroxyacyl]-N-acetyl-alpha-D-glucosamine + H2O = a UDP-3-O-[(3R)-3-hydroxyacyl]-alpha-D-glucosamine + acetate. Its pathway is glycolipid biosynthesis; lipid IV(A) biosynthesis; lipid IV(A) from (3R)-3-hydroxytetradecanoyl-[acyl-carrier-protein] and UDP-N-acetyl-alpha-D-glucosamine: step 2/6. Catalyzes the hydrolysis of UDP-3-O-myristoyl-N-acetylglucosamine to form UDP-3-O-myristoylglucosamine and acetate, the committed step in lipid A biosynthesis. This is UDP-3-O-acyl-N-acetylglucosamine deacetylase from Citrifermentans bemidjiense (strain ATCC BAA-1014 / DSM 16622 / JCM 12645 / Bem) (Geobacter bemidjiensis).